The chain runs to 260 residues: Ubiquinone/menaquinone biosynthesis C-methyltransferase UbiE (260 aa).

S-adenosyl-L-methionine contacts are provided by residues threonine 83, aspartate 104, and 132 to 133 (NA).

The protein belongs to the class I-like SAM-binding methyltransferase superfamily. MenG/UbiE family.

The catalysed reaction is a 2-demethylmenaquinol + S-adenosyl-L-methionine = a menaquinol + S-adenosyl-L-homocysteine + H(+). It carries out the reaction a 2-methoxy-6-(all-trans-polyprenyl)benzene-1,4-diol + S-adenosyl-L-methionine = a 5-methoxy-2-methyl-3-(all-trans-polyprenyl)benzene-1,4-diol + S-adenosyl-L-homocysteine + H(+). It participates in quinol/quinone metabolism; menaquinone biosynthesis; menaquinol from 1,4-dihydroxy-2-naphthoate: step 2/2. It functions in the pathway cofactor biosynthesis; ubiquinone biosynthesis. Its function is as follows. Methyltransferase required for the conversion of demethylmenaquinol (DMKH2) to menaquinol (MKH2) and the conversion of 2-polyprenyl-6-methoxy-1,4-benzoquinol (DDMQH2) to 2-polyprenyl-3-methyl-6-methoxy-1,4-benzoquinol (DMQH2). This chain is Ubiquinone/menaquinone biosynthesis C-methyltransferase UbiE, found in Bartonella henselae (strain ATCC 49882 / DSM 28221 / CCUG 30454 / Houston 1) (Rochalimaea henselae).